Here is a 235-residue protein sequence, read N- to C-terminus: Probable transcriptional regulatory protein MPN_478 (235 aa).

Belongs to the TACO1 family.

Its subcellular location is the cytoplasm. The polypeptide is Probable transcriptional regulatory protein MPN_478 (Mycoplasma pneumoniae (strain ATCC 29342 / M129 / Subtype 1) (Mycoplasmoides pneumoniae)).